Reading from the N-terminus, the 114-residue chain is Lymphotactin (114 aa).

Positions 1–21 are cleaved as a signal peptide; it reads MRLLILALLGICSLTAYIVEG. Cysteines 32 and 69 form a disulfide. A disordered region spans residues 91-114; the sequence is RNNMIQTKPTGTQQSTNTAVTLTG.

This sequence belongs to the intercrine gamma family. As to expression, highest level in spleen, lower in peripheral leukocytes and very low levels in lung, colon and small intestine.

Its subcellular location is the secreted. Functionally, chemotactic activity for lymphocytes but not for monocytes or neutrophils. In thymus, mediates medullary accumulation of thymic dendritic cells and contributes to regulatoy T cell development, playing a role in self-tolerance establishment. This Homo sapiens (Human) protein is Lymphotactin (XCL1).